A 37-amino-acid chain; its full sequence is Antifungal protein 4 (37 aa).

Its subcellular location is the secreted. Functionally, possesses antifungal activity against P.infestans but not F.graminearum. In Malva parviflora (Little mallow), this protein is Antifungal protein 4.